The sequence spans 308 residues: Ribosomal RNA small subunit methyltransferase H (308 aa).

Residues 34–36, aspartate 54, phenylalanine 80, aspartate 101, and glutamine 108 contribute to the S-adenosyl-L-methionine site; that span reads GGH.

The protein belongs to the methyltransferase superfamily. RsmH family.

The protein localises to the cytoplasm. It catalyses the reaction cytidine(1402) in 16S rRNA + S-adenosyl-L-methionine = N(4)-methylcytidine(1402) in 16S rRNA + S-adenosyl-L-homocysteine + H(+). Specifically methylates the N4 position of cytidine in position 1402 (C1402) of 16S rRNA. This is Ribosomal RNA small subunit methyltransferase H from Ureaplasma urealyticum serovar 10 (strain ATCC 33699 / Western).